The following is a 620-amino-acid chain: Arginine--tRNA ligase (620 aa).

The 'HIGH' region signature appears at 147–157 (ANPTGPIHIGG).

This sequence belongs to the class-I aminoacyl-tRNA synthetase family. As to quaternary structure, monomer.

Its subcellular location is the cytoplasm. The enzyme catalyses tRNA(Arg) + L-arginine + ATP = L-arginyl-tRNA(Arg) + AMP + diphosphate. The polypeptide is Arginine--tRNA ligase (Bifidobacterium longum (strain NCC 2705)).